Consider the following 433-residue polypeptide: Steroid hormone receptor ERR2 (433 aa).

Positions 1 to 38 are disordered; the sequence is MSSDDRHLGSSCGSFIKTEPSSPSSGIDALSHHSPSGS. Residues 28–38 show a composition bias toward low complexity; sequence DALSHHSPSGS. The interaction with NANOG stretch occupies residues 93–211; that stretch reads YMLNAIPKRL…SPPAKKPLTK (119 aa). Residues 100 to 186 constitute a DNA-binding region (nuclear receptor); that stretch reads KRLCLVCGDI…RVRGGRQKYK (87 aa). 2 NR C4-type zinc fingers span residues 103–123 and 139–163; these read CLVCGDIASGYHYGVASCEAC and CPATNECEITKRRRKSCQACRFMKC. Residues 203–433 form an essential for ESRRB transcriptional activity and interaction with NCOA3 region; the sequence is PPAKKPLTKI…LFLEMLEAKV (231 aa). The NR LBD domain maps to 208–432; it reads PLTKIVSYLL…KLFLEMLEAK (225 aa).

Belongs to the nuclear hormone receptor family. NR3 subfamily. As to quaternary structure, binds DNA as a monomer. Interacts with NR0B1; represses ESRRB activity at the GATA6 promoter. Interacts with NANOG; reciprocally modulates their transcriptional activities and activates POU5F1 expression. Interacts with NCOA3; mediates the interaction between ESRRB and RNA polymerase II complexes and allows NCOA3 corecruitment to ESRRB, KLF4, NANOG, and SOX2 enhancer regions to trigger ESRRB-dependent gene activation involved in self-renewal and pluripotency. Interacts with KDM1A; co-occupes the core set of ESRRB targets including ELF5 and EOMES. Interacts with the multiprotein complex Integrator, at least composed of INTS1, INTS2, INTS3, INTS4, INTS5, INTS6, INTS7, INTS8, INTS9/RC74, INTS10, INTS11/CPSF3L and INTS12; ESRRB is probably not a core component of the integrator complex and associates to integrator via its interaction with INTS1 and INTS9; attracts the transcriptional machinery. Interacts with JARID2. Interacts with POU5F1; recruits ESRRB near the POU5F1-SOX2 element in the NANOG proximal promoter leading to activation of NANOG expression; the interaction is DNA independent. Interacts with NFE2L2; represses NFE2L2 transcriptional activity. Isoform 1 interacts with ESR1. In terms of processing, acetylated by PCAF/KAT2 (in vitro).

Its subcellular location is the nucleus. It is found in the cytoplasm. The protein localises to the chromosome. Functionally, transcription factor that binds a canonical ESRRB recognition (ERRE) sequence 5'TCAAGGTCA-3' localized on promoter and enhancer of targets genes regulating their expression or their transcription activity. Plays a role, in a LIF-independent manner, in maintainance of self-renewal and pluripotency of embryonic and trophoblast stem cells through different signaling pathways including FGF signaling pathway and Wnt signaling pathways. Involved in morula development (2-16 cells embryos) by acting as a regulator at the 8-cell stage. Upon FGF signaling pathway activation, interacts with KDM1A by directly binding to enhancer site of ELF5 and EOMES and activating their transcription leading to self-renewal of trophoblast stem cells. Also regulates expression of multiple rod-specific genes and is required for survival of this cell type. Plays a role as transcription factor activator of GATA6, NR0B1, POU5F1 and PERM1. Plays a role as transcription factor repressor of NFE2L2 transcriptional activity and ESR1 transcriptional activity. During mitosis remains bound to a subset of interphase target genes, including pluripotency regulators, through the canonical ESRRB recognition (ERRE) sequence, leading to their transcriptional activation in early G1 phase. Can coassemble on structured DNA elements with other transcription factors like SOX2, POU5F1, KDM1A and NCOA3 to trigger ESRRB-dependent gene activation. This mechanism, in the case of SOX2 corecruitment prevents the embryonic stem cells (ESCs) to epiblast stem cells (EpiSC) transition through positive regulation of NR0B1 that inhibits the EpiSC transcriptional program. Also plays a role inner ear development by controlling expression of ion channels and transporters and in early placentation. Its function is as follows. Transcription factor that binds a canonical ESRRB recognition (ERRE) sequence 5'TCAAGGTCA-3' localized on promoter and enhancer of targets genes regulating their expression or their transcription activity. Positively regulates ESR1 transcriptional activity upon E2 stimulation. This is Steroid hormone receptor ERR2 from Homo sapiens (Human).